Reading from the N-terminus, the 216-residue chain is Octanoyltransferase (216 aa).

A BPL/LPL catalytic domain is found at 32-207 (SDSQDELWIV…TFSQIMGYQQ (176 aa)). Residues 71–78 (RGGQVTYH), 138–140 (SLG), and 151–153 (GLA) contribute to the substrate site. Catalysis depends on Cys169, which acts as the Acyl-thioester intermediate.

This sequence belongs to the LipB family.

Its subcellular location is the cytoplasm. The catalysed reaction is octanoyl-[ACP] + L-lysyl-[protein] = N(6)-octanoyl-L-lysyl-[protein] + holo-[ACP] + H(+). The protein operates within protein modification; protein lipoylation via endogenous pathway; protein N(6)-(lipoyl)lysine from octanoyl-[acyl-carrier-protein]: step 1/2. Catalyzes the transfer of endogenously produced octanoic acid from octanoyl-acyl-carrier-protein onto the lipoyl domains of lipoate-dependent enzymes. Lipoyl-ACP can also act as a substrate although octanoyl-ACP is likely to be the physiological substrate. This Shewanella frigidimarina (strain NCIMB 400) protein is Octanoyltransferase.